The sequence spans 799 residues: Disintegrin and metalloproteinase domain-containing protein B (799 aa).

Positions 1-23 (MKAFSCLLSVIATAASLFQHVDA) are cleaved as a signal peptide. Topologically, residues 24–707 (RSHARDKLNN…VSDWVSRHKP (684 aa)) are extracellular. Residues N33, N227, N228, N314, and N408 are each glycosylated (N-linked (GlcNAc...) asparagine). The 240-residue stretch at 272–511 (KVALIGVVAD…RTILTSCLTT (240 aa)) folds into the Peptidase M12B domain. Disulfide bonds link C396–C496, C449–C460, and C581–C601. H432 is a Zn(2+) binding site. E433 is a catalytic residue. Zn(2+) is bound by residues H436 and H442. The 90-residue stretch at 520–609 (GQQCGNGIVE…DCPHDIHSKD (90 aa)) folds into the Disintegrin domain. A helical transmembrane segment spans residues 708–728 (IVIGVAVGAGCLLLLAIASCI). Over 729–799 (CGRSRRQRPR…PGHLPSTRYA (71 aa)) the chain is Cytoplasmic. Positions 753 to 799 (VYNGWNGAPPNAQQSSPGGHPPYNNIPPPINAPPPAYPGHLPSTRYA) are disordered. Over residues 776 to 789 (NNIPPPINAPPPAY) the composition is skewed to pro residues.

Zn(2+) serves as cofactor.

Its subcellular location is the membrane. Its function is as follows. Probable zinc protease. This Arthroderma benhamiae (strain ATCC MYA-4681 / CBS 112371) (Trichophyton mentagrophytes) protein is Disintegrin and metalloproteinase domain-containing protein B (ADM-B).